The following is a 197-amino-acid chain: Molybdenum cofactor guanylyltransferase (197 aa).

GTP contacts are provided by residues 10–12 (LAG), Lys-23, Asn-51, Asp-69, and Asp-99. Asp-99 contributes to the Mg(2+) binding site.

It belongs to the MobA family. In terms of assembly, monomer. The cofactor is Mg(2+).

The protein resides in the cytoplasm. It catalyses the reaction Mo-molybdopterin + GTP + H(+) = Mo-molybdopterin guanine dinucleotide + diphosphate. Its function is as follows. Transfers a GMP moiety from GTP to Mo-molybdopterin (Mo-MPT) cofactor (Moco or molybdenum cofactor) to form Mo-molybdopterin guanine dinucleotide (Mo-MGD) cofactor. This chain is Molybdenum cofactor guanylyltransferase, found in Shewanella sp. (strain ANA-3).